Reading from the N-terminus, the 352-residue chain is Peptide chain release factor 1 (352 aa).

Residue glutamine 233 is modified to N5-methylglutamine. The disordered stretch occupies residues 288-309; it reads NAKDRKEQVGSGDRSERIRTYN. Residues 289–306 are compositionally biased toward basic and acidic residues; the sequence is AKDRKEQVGSGDRSERIR.

It belongs to the prokaryotic/mitochondrial release factor family. In terms of processing, methylated by PrmC. Methylation increases the termination efficiency of RF1.

It localises to the cytoplasm. In terms of biological role, peptide chain release factor 1 directs the termination of translation in response to the peptide chain termination codons UAG and UAA. The chain is Peptide chain release factor 1 from Helicobacter pylori (strain HPAG1).